Here is a 317-residue protein sequence, read N- to C-terminus: Nicotianamine synthase (317 aa).

The protein belongs to the nicotianamine synthase (NAS)-like family. In terms of assembly, homomultimer. In terms of tissue distribution, leaves and roots.

The catalysed reaction is 3 S-adenosyl-L-methionine = nicotianamine + 3 S-methyl-5'-thioadenosine + 3 H(+). Its function is as follows. Synthesizes nicotianamine, a polyamine that serves as a sensor for the physiological iron status within the plant, and/or might be involved in the transport of iron. This chain is Nicotianamine synthase (CHLN), found in Solanum lycopersicum (Tomato).